The chain runs to 362 residues: Major capsid protein VP1 (362 aa).

Residues 1–21 (MAPTKRKGSCPGAAPKKPKEP) are disordered. The Bipartite nuclear localization signal motif lies at 5–19 (KRKGSCPGAAPKKPK). Residues 302 to 362 (ISFLLSDLIN…EFGQTTTRMQ (61 aa)) form a C-terminal arm region. Position 338 is a phosphothreonine; by host (T338).

Belongs to the polyomaviruses coat protein VP1 family. Homomultimer; disulfide-linked. The virus capsid is composed of 72 icosahedral units, each one composed of five disulfide-linked copies of VP1. Interacts with agnoprotein. Interacts with minor capsid proteins VP2 and VP3. Interacts with host HSPA8; this interaction probably participates in virus assembly. Interacts with host SP1; this interaction enhances the efficiency of viral packaging.

The protein localises to the virion. Its subcellular location is the host nucleus. The protein resides in the host endoplasmic reticulum. In terms of biological role, forms an icosahedral capsid with a T=7 symmetry and a 40 nm diameter. The capsid is composed of 72 pentamers linked to each other by disulfide bonds and associated with VP2 or VP3 proteins. Binds to N-glycolylneuraminic analog of the ganglioside GM1 on the cell surface to provide virion attachment to target cell. Once attached, the virion is internalized by caveolin-mediated endocytosis and traffics to the endoplasmic reticulum. Inside the endoplasmic reticulum, the protein folding machinery isomerizes VP1 interpentamer disulfide bonds, thereby triggering initial uncoating. Next, the virion uses the endoplasmic reticulum-associated degradation machinery to probably translocate in the cytosol before reaching the nucleus. Nuclear entry of the viral DNA involves the selective exposure and importin recognition of VP2/Vp3 nuclear localization signal. The assembly takes place in the cell nucleus. Encapsulates the genomic DNA and participates in rearranging nucleosomes around the viral DNA. The viral progenies exit the cells by lytic release. In Macaca (macaques), this protein is Major capsid protein VP1.